A 364-amino-acid chain; its full sequence is tRNA 2-selenouridine synthase (364 aa).

Residues 14 to 137 form the Rhodanese domain; the sequence is LIADTPIIDV…LRQTAIQATI (124 aa). C97 (S-selanylcysteine intermediate) is an active-site residue.

Belongs to the SelU family. In terms of assembly, monomer.

It catalyses the reaction 5-methylaminomethyl-2-thiouridine(34) in tRNA + selenophosphate + (2E)-geranyl diphosphate + H2O + H(+) = 5-methylaminomethyl-2-selenouridine(34) in tRNA + (2E)-thiogeraniol + phosphate + diphosphate. The catalysed reaction is 5-methylaminomethyl-2-thiouridine(34) in tRNA + (2E)-geranyl diphosphate = 5-methylaminomethyl-S-(2E)-geranyl-thiouridine(34) in tRNA + diphosphate. It carries out the reaction 5-methylaminomethyl-S-(2E)-geranyl-thiouridine(34) in tRNA + selenophosphate + H(+) = 5-methylaminomethyl-2-(Se-phospho)selenouridine(34) in tRNA + (2E)-thiogeraniol. The enzyme catalyses 5-methylaminomethyl-2-(Se-phospho)selenouridine(34) in tRNA + H2O = 5-methylaminomethyl-2-selenouridine(34) in tRNA + phosphate. Functionally, involved in the post-transcriptional modification of the uridine at the wobble position (U34) of tRNA(Lys), tRNA(Glu) and tRNA(Gln). Catalyzes the conversion of 2-thiouridine (S2U-RNA) to 2-selenouridine (Se2U-RNA). Acts in a two-step process involving geranylation of 2-thiouridine (S2U) to S-geranyl-2-thiouridine (geS2U) and subsequent selenation of the latter derivative to 2-selenouridine (Se2U) in the tRNA chain. The protein is tRNA 2-selenouridine synthase of Escherichia fergusonii (strain ATCC 35469 / DSM 13698 / CCUG 18766 / IAM 14443 / JCM 21226 / LMG 7866 / NBRC 102419 / NCTC 12128 / CDC 0568-73).